The primary structure comprises 307 residues: Mitogen-activated protein kinase kinase 7 (307 aa).

In terms of domain architecture, Protein kinase spans 45–303; sequence VEKLHVLGRG…ASQLLGHPFL (259 aa). ATP contacts are provided by residues 51–59 and lysine 74; that span reads LGRGSSGIV. Aspartate 165 functions as the Proton acceptor in the catalytic mechanism. Serine 193 and serine 199 each carry phosphoserine. The residue at position 203 (threonine 203) is a Phosphothreonine.

The protein belongs to the protein kinase superfamily. STE Ser/Thr protein kinase family. MAP kinase kinase subfamily. Interacts with MPK15. In terms of processing, phosphorylation at Ser-193 and Ser-199 by MAP kinase kinase kinases positively regulates kinase activity. As to expression, expressed in all tissues, with a relatively higher level in leaves and lower level in roots and flowers.

The catalysed reaction is L-seryl-[protein] + ATP = O-phospho-L-seryl-[protein] + ADP + H(+). The enzyme catalyses L-threonyl-[protein] + ATP = O-phospho-L-threonyl-[protein] + ADP + H(+). It carries out the reaction L-tyrosyl-[protein] + ATP = O-phospho-L-tyrosyl-[protein] + ADP + H(+). Functionally, may function as a negative regulator of polar auxin transport. Positively regulates plant basal and systemic acquired resistance (SAR). Activates MPK3 and MPK6 in vitro. In Arabidopsis thaliana (Mouse-ear cress), this protein is Mitogen-activated protein kinase kinase 7 (MKK7).